Consider the following 182-residue polypeptide: Large ribosomal subunit protein uL10 (182 aa).

This sequence belongs to the universal ribosomal protein uL10 family. Part of the ribosomal stalk of the 50S ribosomal subunit. The N-terminus interacts with L11 and the large rRNA to form the base of the stalk. The C-terminus forms an elongated spine to which L12 dimers bind in a sequential fashion forming a multimeric L10(L12)X complex.

In terms of biological role, forms part of the ribosomal stalk, playing a central role in the interaction of the ribosome with GTP-bound translation factors. The chain is Large ribosomal subunit protein uL10 from Leptothrix cholodnii (strain ATCC 51168 / LMG 8142 / SP-6) (Leptothrix discophora (strain SP-6)).